The chain runs to 86 residues: Large ribosomal subunit protein bL31 (86 aa).

A disordered region spans residues 65-86 (YGMGSANSATSKEQKEEKDSKK). Residues 76-86 (KEQKEEKDSKK) show a composition bias toward basic and acidic residues.

It belongs to the bacterial ribosomal protein bL31 family. Type A subfamily. In terms of assembly, part of the 50S ribosomal subunit.

Functionally, binds the 23S rRNA. The protein is Large ribosomal subunit protein bL31 of Prochlorococcus marinus (strain AS9601).